A 53-amino-acid polypeptide reads, in one-letter code: MFYTNVETLLNTNCFALLPEAYAPFDPLVDVLPIIPLLFLLLAFVWQAAVKFR.

The propeptide occupies 1–16; it reads MFYTNVETLLNTNCFA. Residues 28–48 traverse the membrane as a helical segment; sequence LVDVLPIIPLLFLLLAFVWQA.

It belongs to the PsbK family. In terms of assembly, PSII is composed of 1 copy each of membrane proteins PsbA, PsbB, PsbC, PsbD, PsbE, PsbF, PsbH, PsbI, PsbJ, PsbK, PsbL, PsbM, PsbT, PsbY, PsbZ, Psb30/Ycf12, at least 3 peripheral proteins of the oxygen-evolving complex and a large number of cofactors. It forms dimeric complexes.

Its subcellular location is the plastid. It is found in the chloroplast thylakoid membrane. Its function is as follows. One of the components of the core complex of photosystem II (PSII). PSII is a light-driven water:plastoquinone oxidoreductase that uses light energy to abstract electrons from H(2)O, generating O(2) and a proton gradient subsequently used for ATP formation. It consists of a core antenna complex that captures photons, and an electron transfer chain that converts photonic excitation into a charge separation. The sequence is that of Photosystem II reaction center protein K from Euglena anabaena (Euglenaria anabaena).